The following is a 396-amino-acid chain: 8-amino-7-oxononanoate synthase (396 aa).

A substrate-binding site is contributed by Arg-31. Position 118–119 (118–119 (GY)) interacts with pyridoxal 5'-phosphate. His-143 contacts substrate. Residues Ser-189, His-217, and Thr-245 each coordinate pyridoxal 5'-phosphate. N6-(pyridoxal phosphate)lysine is present on Lys-248. Substrate is bound at residue Thr-362.

This sequence belongs to the class-II pyridoxal-phosphate-dependent aminotransferase family. BioF subfamily. As to quaternary structure, homodimer. Pyridoxal 5'-phosphate is required as a cofactor.

It catalyses the reaction 6-carboxyhexanoyl-[ACP] + L-alanine + H(+) = (8S)-8-amino-7-oxononanoate + holo-[ACP] + CO2. It functions in the pathway cofactor biosynthesis; biotin biosynthesis. Catalyzes the decarboxylative condensation of pimeloyl-[acyl-carrier protein] and L-alanine to produce 8-amino-7-oxononanoate (AON), [acyl-carrier protein], and carbon dioxide. The polypeptide is 8-amino-7-oxononanoate synthase (Methylobacillus flagellatus (strain ATCC 51484 / DSM 6875 / VKM B-1610 / KT)).